We begin with the raw amino-acid sequence, 258 residues long: NAD-capped RNA hydrolase NudC (258 aa).

A substrate-binding site is contributed by R69. C98 and C101 together coordinate Zn(2+). Position 111 (E111) interacts with substrate. Residues C116 and C119 each contribute to the Zn(2+) site. Y124 provides a ligand contact to substrate. The Nudix hydrolase domain maps to P125–T248. A divalent metal cation is bound by residues A158, E174, and E178. A Nudix box motif is present at residues G159–G180. Q192–S199 contributes to the substrate binding site. An a divalent metal cation-binding site is contributed by E219. A241 provides a ligand contact to substrate.

It belongs to the Nudix hydrolase family. NudC subfamily. In terms of assembly, homodimer. Requires Mg(2+) as cofactor. The cofactor is Mn(2+). It depends on Zn(2+) as a cofactor.

It carries out the reaction a 5'-end NAD(+)-phospho-ribonucleoside in mRNA + H2O = a 5'-end phospho-adenosine-phospho-ribonucleoside in mRNA + beta-nicotinamide D-ribonucleotide + 2 H(+). The catalysed reaction is NAD(+) + H2O = beta-nicotinamide D-ribonucleotide + AMP + 2 H(+). It catalyses the reaction NADH + H2O = reduced beta-nicotinamide D-ribonucleotide + AMP + 2 H(+). In terms of biological role, mRNA decapping enzyme that specifically removes the nicotinamide adenine dinucleotide (NAD) cap from a subset of mRNAs by hydrolyzing the diphosphate linkage to produce nicotinamide mononucleotide (NMN) and 5' monophosphate mRNA. The NAD-cap is present at the 5'-end of some mRNAs and stabilizes RNA against 5'-processing. Has preference for mRNAs with a 5'-end purine. Catalyzes the hydrolysis of a broad range of dinucleotide pyrophosphates. The polypeptide is NAD-capped RNA hydrolase NudC (Enterobacter sp. (strain 638)).